We begin with the raw amino-acid sequence, 198 residues long: Suppressor of cytokine signaling 2 (198 aa).

The segment at 1 to 31 (MTLRCLEPSGNGADRTRSQWGTAGSPEDQSP) is disordered. Residues 1–75 (MTLRCLEPSG…PEGTFLIRDS (75 aa)) are interaction with AREL1. 2 positions are modified to phosphoserine: Ser-30 and Ser-52. The SH2 domain maps to 48–156 (WYWGSMTVNE…TVHLYLTKPL (109 aa)). Positions 151–197 (YLTKPLYTSAPTLQHFCRLSINKCTGTIRGLPLPTRLKDYLEEYKFQ) constitute an SOCS box domain. A Glycyl lysine isopeptide (Lys-Gly) (interchain with G-Cter in ubiquitin) cross-link involves residue Lys-173.

Substrate-recognition component of the ECS(SOCS2) complex, composed of SOCS2, CUL5, ELOB, ELOC and RNF7/RBX2. Interacts with IGF1R. Interacts with DCUN1D1. Ubiquitinated; mediated by AREL1 and leading to its subsequent proteasomal degradation. Ubiquitination is dependent on its phosphorylation at Ser-52, by PKC. Ubiquitination is stimulated by LPS. Post-translationally, phosphorylation at Ser-52 by PKC facilitates its ubiquitination and proteasomal degradation.

The protein localises to the cytoplasm. The protein operates within protein modification; protein ubiquitination. In terms of biological role, substrate-recognition component of a cullin-5-RING E3 ubiquitin-protein ligase complex (ECS complex, also named CRL5 complex), which mediates the ubiquitination and subsequent proteasomal degradation of target proteins, such as EPOR and GHR. Specifically recognizes and binds phosphorylated proteins via its SH2 domain, promoting their ubiquitination. The ECS(SOCS2) complex acts as a key regulator of growth hormone receptor (GHR) levels by mediating ubiquitination and degradation of GHR, following GHR phosphorylation by JAK2. The ECS(SOCS2) also catalyzes ubiquitination and degradation of JAK2-phosphorylated EPOR. The protein is Suppressor of cytokine signaling 2 (Socs2) of Rattus norvegicus (Rat).